The following is a 479-amino-acid chain: ATP synthase subunit beta (479 aa).

158 to 165 lines the ATP pocket; it reads GGAGLGKT.

This sequence belongs to the ATPase alpha/beta chains family. As to quaternary structure, F-type ATPases have 2 components, CF(1) - the catalytic core - and CF(0) - the membrane proton channel. CF(1) has five subunits: alpha(3), beta(3), gamma(1), delta(1), epsilon(1). CF(0) has three main subunits: a(1), b(2) and c(9-12). The alpha and beta chains form an alternating ring which encloses part of the gamma chain. CF(1) is attached to CF(0) by a central stalk formed by the gamma and epsilon chains, while a peripheral stalk is formed by the delta and b chains.

It localises to the cell inner membrane. It carries out the reaction ATP + H2O + 4 H(+)(in) = ADP + phosphate + 5 H(+)(out). Produces ATP from ADP in the presence of a proton gradient across the membrane. The catalytic sites are hosted primarily by the beta subunits. This Rhodopirellula baltica (strain DSM 10527 / NCIMB 13988 / SH1) protein is ATP synthase subunit beta.